Reading from the N-terminus, the 63-residue chain is Large ribosomal subunit protein bL32 (63 aa).

A disordered region spans residues 1-23; sequence MATPKAKVSKSRRDKRRAQFTAR. Positions 7 to 18 are enriched in basic residues; sequence KVSKSRRDKRRA.

It belongs to the bacterial ribosomal protein bL32 family.

This is Large ribosomal subunit protein bL32 from Chlorobium phaeobacteroides (strain BS1).